The following is a 74-amino-acid chain: Putative membrane protein insertion efficiency factor (74 aa).

The protein belongs to the UPF0161 family.

It localises to the cell inner membrane. Functionally, could be involved in insertion of integral membrane proteins into the membrane. In Syntrophus aciditrophicus (strain SB), this protein is Putative membrane protein insertion efficiency factor.